Reading from the N-terminus, the 893-residue chain is UPF0182 protein CLI_0022 (893 aa).

A run of 7 helical transmembrane segments spans residues 9–29 (IPLF…NFII), 49–69 (AIII…WMYY), 94–114 (LFFI…SSSY), 154–174 (VIIS…FILE), 202–222 (LAIV…IKIW), 246–266 (FYKI…LSIV), and 273–293 (VSIC…ASFL).

This sequence belongs to the UPF0182 family.

It is found in the cell membrane. The protein is UPF0182 protein CLI_0022 of Clostridium botulinum (strain Langeland / NCTC 10281 / Type F).